Reading from the N-terminus, the 432-residue chain is 3-phosphoshikimate 1-carboxyvinyltransferase (432 aa).

3 residues coordinate 3-phosphoshikimate: Lys23, Ser24, and Arg28. Residue Lys23 participates in phosphoenolpyruvate binding. Phosphoenolpyruvate-binding residues include Gly95 and Arg123. Ser167, Gln169, Asp317, and Lys344 together coordinate 3-phosphoshikimate. Gln169 lines the phosphoenolpyruvate pocket. Asp317 (proton acceptor) is an active-site residue. Residues Arg348 and Arg390 each coordinate phosphoenolpyruvate.

It belongs to the EPSP synthase family. In terms of assembly, monomer.

It localises to the cytoplasm. The enzyme catalyses 3-phosphoshikimate + phosphoenolpyruvate = 5-O-(1-carboxyvinyl)-3-phosphoshikimate + phosphate. It participates in metabolic intermediate biosynthesis; chorismate biosynthesis; chorismate from D-erythrose 4-phosphate and phosphoenolpyruvate: step 6/7. Functionally, catalyzes the transfer of the enolpyruvyl moiety of phosphoenolpyruvate (PEP) to the 5-hydroxyl of shikimate-3-phosphate (S3P) to produce enolpyruvyl shikimate-3-phosphate and inorganic phosphate. The sequence is that of 3-phosphoshikimate 1-carboxyvinyltransferase from Staphylococcus aureus (strain Newman).